Here is a 92-residue protein sequence, read N- to C-terminus: Signal recognition particle 19 kDa protein (92 aa).

This sequence belongs to the SRP19 family. Part of the signal recognition particle protein translocation system, which is composed of SRP and FtsY. Archaeal SRP consists of a 7S RNA molecule of 300 nucleotides and two protein subunits: SRP54 and SRP19.

The protein resides in the cytoplasm. Functionally, involved in targeting and insertion of nascent membrane proteins into the cytoplasmic membrane. Binds directly to 7S RNA and mediates binding of the 54 kDa subunit of the SRP. The protein is Signal recognition particle 19 kDa protein of Methanosphaera stadtmanae (strain ATCC 43021 / DSM 3091 / JCM 11832 / MCB-3).